The sequence spans 430 residues: Cyclin-A2 (430 aa).

Met-1 carries the N-acetylmethionine modification. Disordered regions lie at residues 1-80 and 106-129; these read MLGS…PIND and EEIQ…FNSA. Ser-5 is modified (phosphoserine). Basic and acidic residues predominate over residues 107-120; it reads EIQKRPTESKKSES.

The protein belongs to the cyclin family. Cyclin AB subfamily. In terms of assembly, interacts with the CDK1 and CDK2 protein kinases to form serine/threonine kinase holoenzyme complexes. Interacts with CDK1 (hyperphosphorylated form in G1 and underphosphorylated forms in S and G2). Interacts with CDK2; the interaction increases from G1 to G2. Interacts (associated with CDK2 but not with CDK1) with SCAPER; regulates the activity of CCNA2/CDK2 by transiently maintaining CCNA2 in the cytoplasm. Forms a ternary complex with CDK2 and CDKN1B; CDKN1B inhibits the kinase activity of CDK2 through conformational rearrangements. Interacts with INCA1. Post-translationally, polyubiquitinated via 'Lys-11'-linked ubiquitin by the anaphase-promoting complex (APC/C), leading to its degradation by the proteasome. Deubiquitinated and stabilized by USP37 enables entry into S phase. Ubiquitinated during the G1 phase by the SCF(FBXO31) complex, leading to its proteasomal degradation.

It is found in the nucleus. It localises to the cytoplasm. Functionally, cyclin which controls both the G1/S and the G2/M transition phases of the cell cycle. Functions through the formation of specific serine/threonine kinase holoenzyme complexes with the cyclin-dependent protein kinases CDK1 and CDK2. The cyclin subunit confers the substrate specificity of these complexes and differentially interacts with and activates CDK1 and CDK2 throughout the cell cycle. The sequence is that of Cyclin-A2 from Bos taurus (Bovine).